A 540-amino-acid polypeptide reads, in one-letter code: Coatomer subunit delta (540 aa).

The disordered stretch occupies residues 169 to 263 (RHEEMLRGKR…GMILGGKSGT (95 aa)). Residues 179 to 197 (SGGYTGISGGGGMGSGGMG) are compositionally biased toward gly residues. Positions 212–229 (NNNNNNNNNNNNNNNNNN) are enriched in low complexity. A compositionally biased stretch (polar residues) spans 238 to 250 (SPNTSRPSAASSG). The segment covering 251 to 261 (SQGGMILGGKS) has biased composition (gly residues). The MHD domain maps to 304-540 (QEGVHITVEE…TLSVDTYEIK (237 aa)).

It belongs to the adaptor complexes medium subunit family. Delta-COP subfamily. As to quaternary structure, oligomeric complex that consists of at least the alpha, beta, beta', gamma, delta, epsilon and zeta subunits.

Its subcellular location is the cytoplasm. The protein resides in the golgi apparatus membrane. It is found in the cytoplasmic vesicle. It localises to the COPI-coated vesicle membrane. The coatomer is a cytosolic protein complex that binds to dilysine motifs and reversibly associates with Golgi non-clathrin-coated vesicles, which further mediate biosynthetic protein transport from the ER, via the Golgi up to the trans Golgi network. Coatomer complex is required for budding from Golgi membranes, and is essential for the retrograde Golgi-to-ER transport of dilysine-tagged proteins. This Dictyostelium discoideum (Social amoeba) protein is Coatomer subunit delta (copd).